The chain runs to 163 residues: UPF0134 protein MPN_139 (163 aa).

Belongs to the UPF0134 family.

The polypeptide is UPF0134 protein MPN_139 (Mycoplasma pneumoniae (strain ATCC 29342 / M129 / Subtype 1) (Mycoplasmoides pneumoniae)).